The primary structure comprises 264 residues: tRNA pseudouridine synthase A (264 aa).

The active-site Nucleophile is the D51. Y109 contributes to the substrate binding site.

Belongs to the tRNA pseudouridine synthase TruA family. In terms of assembly, homodimer.

The enzyme catalyses uridine(38/39/40) in tRNA = pseudouridine(38/39/40) in tRNA. Its function is as follows. Formation of pseudouridine at positions 38, 39 and 40 in the anticodon stem and loop of transfer RNAs. This Polaromonas sp. (strain JS666 / ATCC BAA-500) protein is tRNA pseudouridine synthase A.